A 478-amino-acid polypeptide reads, in one-letter code: Protein trichome birefringence-like 20 (478 aa).

Residues 10–30 (IGLVIFPLILLTIAPILYLFF) traverse the membrane as a helical; Signal-anchor for type II membrane protein segment. Over residues 50-68 (SSAISSPSRYNHSSSSSDS) the composition is skewed to low complexity. Positions 50-125 (SSAISSPSRY…KEHRRKKRKR (76 aa)) are disordered. Over residues 92-110 (SSSLHNNDRLSISSSNGHH) the composition is skewed to polar residues. Over residues 112–125 (VTPKKEHRRKKRKR) the composition is skewed to basic residues. A GDS motif motif is present at residues 200 to 202 (GDS). A DCXHWCLPGXXDXWN motif motif is present at residues 447 to 461 (DCVHWCLPGPIDSWN).

Belongs to the PC-esterase family. TBL subfamily.

The protein resides in the membrane. May act as a bridging protein that binds pectin and other cell wall polysaccharides. Probably involved in maintaining esterification of pectins. May be involved in the specific O-acetylation of cell wall polymers. This Arabidopsis thaliana (Mouse-ear cress) protein is Protein trichome birefringence-like 20 (TBL20).